We begin with the raw amino-acid sequence, 519 residues long: uncharacterized protein (519 aa).

11 consecutive transmembrane segments (helical) span residues 52 to 72 (IYFLILLYLIQGVPMGLVRGS), 86 to 106 (LATYSLAAYPYSLKVLWSPIV), 119 to 139 (TWVVPCMLLISSTLLLFSYNV), 156 to 176 (WSFLLVFVCATQDIAVDGWSL), 199 to 219 (FFLSFTILLVFTSPEFANTFI), 231 to 251 (LSGYIKFWAYFTFIASVLVCF), 313 to 333 (MLSLIILINFPLGLALGVYTG), 343 to 363 (IWLKGYWGRVVSILLNTILVY), 374 to 394 (VFFPIFLCYTLNASFSTIQFV), 408 to 430 (IGGTYMTILNTLSNLGGSWPQYV), and 477 to 497 (TSIVGIFLAISICVSLITPVV).

The protein localises to the membrane. This is an uncharacterized protein from Schizosaccharomyces pombe (strain 972 / ATCC 24843) (Fission yeast).